Consider the following 481-residue polypeptide: Probable myosin light chain kinase DDB_G0284661 (481 aa).

Positions 13–269 (YNITDIIGEG…VKQSLAHKWI (257 aa)) constitute a Protein kinase domain. Residues 19-27 (IGEGTFSTV) and lysine 43 contribute to the ATP site. The active-site Proton acceptor is the aspartate 136. Disordered regions lie at residues 285–315 (PLITSQQQQQQSPSSLLSSSSSSTASSPSLK) and 345–427 (SNSH…DDDE). Positions 379–421 (SNNNINNNNDNNDNNNSNSNNSNNNINNFINNNNNNNNNNSNF) are enriched in low complexity.

It belongs to the protein kinase superfamily. CAMK Ser/Thr protein kinase family. CaMK subfamily.

The catalysed reaction is L-seryl-[myosin light chain] + ATP = O-phospho-L-seryl-[myosin light chain] + ADP + H(+). It carries out the reaction L-threonyl-[myosin light chain] + ATP = O-phospho-L-threonyl-[myosin light chain] + ADP + H(+). With respect to regulation, does not have a calmodulin-binding domain. Its function is as follows. May phosphorylate a specific serine in the N-terminus of a myosin light chain. This is Probable myosin light chain kinase DDB_G0284661 from Dictyostelium discoideum (Social amoeba).